The primary structure comprises 288 residues: Type II iodothyronine deiodinase (288 aa).

Residues 1-5 (MPHVN) are Lumenal-facing. A helical; Signal-anchor for type III membrane protein membrane pass occupies residues 6–26 (LLVVLLILPGVFSNCLFLALY). Topologically, residues 27-288 (DAVSFLRRAL…SFLESVKASR (262 aa)) are cytoplasmic. The disordered stretch occupies residues 99–130 (SCAASSSSSHETPTPRTTAEAAATVTTSTTTT). Residue Sec-160 is part of the active site. A non-standard amino acid (selenocysteine) is located at residue Sec-160.

The protein belongs to the iodothyronine deiodinase family. Predominantly monomer. Can form homodimers but homodimerization is not essential for enzyme activity. In terms of tissue distribution, expressed in intestine, liver, kidney and brain of immediately premetamorphic larvae, of larvae in all stages of metamorphosis and of parasitic feeding juveniles. In immediately premetamorphic larvae, levels are significantly higher in intestine and liver than in kidney and brain.

Its subcellular location is the endoplasmic reticulum membrane. It catalyses the reaction 3,3',5-triiodo-L-thyronine + iodide + A + H(+) = L-thyroxine + AH2. The catalysed reaction is 3,3'-diiodo-L-thyronine + iodide + A + H(+) = 3,3',5'-triiodo-L-thyronine + AH2. It carries out the reaction 3'-iodo-L-thyronine + iodide + A + H(+) = 3',5'-diiodo-L-thyronine + AH2. The enzyme catalyses 3,3'-diiodothyronamine + iodide + A + H(+) = 3,3',5'-triiodothyronamine + AH2. It catalyses the reaction 3'-iodothyronamine + iodide + A + H(+) = 3',5'-diiodothyronamine + AH2. Its function is as follows. Plays a crucial role in the metabolism of thyroid hormones (TH) and has specific roles in TH activation and inactivation by deiodination. Catalyzes the deiodination of L-thyroxine (T4) to 3,5,3'-triiodothyronine (T3), 3,3',5'-triiodothyronine (rT3) to 3,3'-diiodothyronine (3,3'-T2) and 3',5'-diiodothyronine (3',5'-T2) to 3'-monoiodothyronine (3'-T1) via outer-ring deiodination (ORD). Catalyzes the phenolic ring deiodinations of 3,3',5'-triiodothyronamine and 3',5'- diiodothyronamine. This Petromyzon marinus (Sea lamprey) protein is Type II iodothyronine deiodinase.